The sequence spans 327 residues: Prenyl transferase janC (327 aa).

Residues 3–23 (FPGAGPILGAIAVSSCLYFLF) traverse the membrane as a helical segment. Positions 63 and 96 each coordinate isopentenyl diphosphate. The Mg(2+) site is built by Asp-103 and Asp-107. Arg-112 and Lys-196 together coordinate dimethylallyl diphosphate. N-linked (GlcNAc...) asparagine glycosylation occurs at Asn-211.

This sequence belongs to the FPP/GGPP synthase family.

It localises to the membrane. It participates in secondary metabolite biosynthesis. Prenyl transferase; part of the gene cluster that mediates the biosynthesis of the indole diterpenes janthitremanes such as shearinine K or shearinine A. The geranylgeranyl diphosphate (GGPP) synthase janG catalyzes the first step in janthitremane biosynthesis via conversion of farnesyl pyrophosphate and isopentyl pyrophosphate into geranylgeranyl pyrophosphate (GGPP). Condensation of indole-3-glycerol phosphate with GGPP by the prenyl transferase janC then forms 3-geranylgeranylindole (3-GGI). Epoxidation by the FAD-dependent monooxygenase janM leads to a epoxidized-GGI that is substrate of the terpene cyclase janB for cyclization to yield paspaline. Paspaline is subsequently converted to 13-desoxypaspaline by the cytochrome P450 monooxygenase janP, via beta-PC-M6 in a series of alpha-face oxidations. The cytochrome P450 monooxygenase janQ is proposed to carry out sequential beta-face oxidation steps at C-7 and C-13 of 13-desoxypaspaline to form paspalicine and paspalinine respectively. The indole diterpene prenyltransferase janD may then convert paspalinine into shearinine K which is substrate of janO and/or additional enzymes for oxidation and cyclization to generate shearinine A. This Penicillium janthinellum (Penicillium vitale) protein is Prenyl transferase janC.